The sequence spans 384 residues: MAAQNGNASFPANFSIPQEHASSLPFNFSYDDYDLPLDEDEDMTKTQTFFAAKIVIGVALVGIMLTCGIGNFVFITALTRYKKLRNLTNLLIANLAISDFLVAIICCPFEMDYYVVHQLSWEHGHVLCACINYLRTVSLYVSTNALLAIAIDRYLAIVHPLKPRMNYQTASFLIALVWMVSILISIPSAYFTKETVLFIVKNQKKIFCGQVWPVDQQLYYKSYFLFVFGIEFLGPVFTMTLCYARISRELWFKAVPGFQTEQIRKRLRCRRKTVLVLMCILTAYVLCWAPFYGFTIVRDFFPTVFVKEKHYLTAFYVVECIAMSNSMINTVCFVTVKNSTMKYFKKMLLLHWRPSHHGSKSSADLDLKTSRLPATEEVDCIRLK.

The Extracellular portion of the chain corresponds to 1-53 (MAAQNGNASFPANFSIPQEHASSLPFNFSYDDYDLPLDEDEDMTKTQTFFAAK). Asn7, Asn13, and Asn27 each carry an N-linked (GlcNAc...) asparagine glycan. Residues 54-74 (IVIGVALVGIMLTCGIGNFVF) form a helical membrane-spanning segment. Topologically, residues 75-89 (ITALTRYKKLRNLTN) are cytoplasmic. Residues 90 to 110 (LLIANLAISDFLVAIICCPFE) traverse the membrane as a helical segment. Topologically, residues 111 to 137 (MDYYVVHQLSWEHGHVLCACINYLRTV) are extracellular. Cys128 and Cys208 are oxidised to a cystine. A helical transmembrane segment spans residues 138–158 (SLYVSTNALLAIAIDRYLAIV). Residues 159-171 (HPLKPRMNYQTAS) lie on the Cytoplasmic side of the membrane. A helical membrane pass occupies residues 172–192 (FLIALVWMVSILISIPSAYFT). Over 193-223 (KETVLFIVKNQKKIFCGQVWPVDQQLYYKSY) the chain is Extracellular. A helical membrane pass occupies residues 224–244 (FLFVFGIEFLGPVFTMTLCYA). Residues 245–273 (RISRELWFKAVPGFQTEQIRKRLRCRRKT) lie on the Cytoplasmic side of the membrane. A helical membrane pass occupies residues 274–294 (VLVLMCILTAYVLCWAPFYGF). The Extracellular portion of the chain corresponds to 295–313 (TIVRDFFPTVFVKEKHYLT). The helical transmembrane segment at 314–334 (AFYVVECIAMSNSMINTVCFV) threads the bilayer. Topologically, residues 335–384 (TVKNSTMKYFKKMLLLHWRPSHHGSKSSADLDLKTSRLPATEEVDCIRLK) are cytoplasmic.

It belongs to the G-protein coupled receptor 1 family. Homodimer.

Its subcellular location is the cell membrane. Functionally, receptor for prokineticin 2. Exclusively coupled to the G(q) subclass of heteromeric G proteins. Activation leads to mobilization of calcium, stimulation of phosphoinositide turnover and activation of p44/p42 mitogen-activated protein kinase. This chain is Prokineticin receptor 2 (PROKR2), found in Bos taurus (Bovine).